The sequence spans 165 residues: 2-C-methyl-D-erythritol 2,4-cyclodiphosphate synthase (165 aa).

2 residues coordinate a divalent metal cation: aspartate 12 and histidine 14. Residues 12-14 (DIH) and 38-39 (HS) contribute to the 4-CDP-2-C-methyl-D-erythritol 2-phosphate site. Histidine 46 provides a ligand contact to a divalent metal cation. 4-CDP-2-C-methyl-D-erythritol 2-phosphate-binding positions include 60 to 62 (DIG), 136 to 139 (TTNE), and arginine 146.

It belongs to the IspF family. As to quaternary structure, homotrimer. A divalent metal cation serves as cofactor.

The enzyme catalyses 4-CDP-2-C-methyl-D-erythritol 2-phosphate = 2-C-methyl-D-erythritol 2,4-cyclic diphosphate + CMP. It functions in the pathway isoprenoid biosynthesis; isopentenyl diphosphate biosynthesis via DXP pathway; isopentenyl diphosphate from 1-deoxy-D-xylulose 5-phosphate: step 4/6. Functionally, involved in the biosynthesis of isopentenyl diphosphate (IPP) and dimethylallyl diphosphate (DMAPP), two major building blocks of isoprenoid compounds. Catalyzes the conversion of 4-diphosphocytidyl-2-C-methyl-D-erythritol 2-phosphate (CDP-ME2P) to 2-C-methyl-D-erythritol 2,4-cyclodiphosphate (ME-CPP) with a corresponding release of cytidine 5-monophosphate (CMP). The chain is 2-C-methyl-D-erythritol 2,4-cyclodiphosphate synthase from Nostoc sp. (strain PCC 7120 / SAG 25.82 / UTEX 2576).